The sequence spans 196 residues: Large ribosomal subunit protein eL15 (196 aa).

Residues 159–196 (RAYRGRTSAGQRGRGQQKRGKGTEHTRPSIRANDKRGK) form a disordered region. Residues 179–196 (KGTEHTRPSIRANDKRGK) are compositionally biased toward basic and acidic residues.

The protein belongs to the eukaryotic ribosomal protein eL15 family.

The protein is Large ribosomal subunit protein eL15 of Natronomonas pharaonis (strain ATCC 35678 / DSM 2160 / CIP 103997 / JCM 8858 / NBRC 14720 / NCIMB 2260 / Gabara) (Halobacterium pharaonis).